A 447-amino-acid chain; its full sequence is Tubulin beta chain (447 aa).

8 residues coordinate GTP: glutamine 11, glutamate 69, serine 138, glycine 142, threonine 143, glycine 144, asparagine 204, and asparagine 226. Glutamate 69 is a binding site for Mg(2+). The tract at residues 424–447 (QYQEARSTDSDEYDNEEYYNQQEE) is disordered. Residues 433–447 (SDEYDNEEYYNQQEE) are compositionally biased toward acidic residues.

Belongs to the tubulin family. Dimer of alpha and beta chains. A typical microtubule is a hollow water-filled tube with an outer diameter of 25 nm and an inner diameter of 15 nM. Alpha-beta heterodimers associate head-to-tail to form protofilaments running lengthwise along the microtubule wall with the beta-tubulin subunit facing the microtubule plus end conferring a structural polarity. Microtubules usually have 13 protofilaments but different protofilament numbers can be found in some organisms and specialized cells. Mg(2+) serves as cofactor. In terms of tissue distribution, lens specific.

It is found in the cytoplasm. Its subcellular location is the cytoskeleton. Tubulin is the major constituent of microtubules, a cylinder consisting of laterally associated linear protofilaments composed of alpha- and beta-tubulin heterodimers. Microtubules grow by the addition of GTP-tubulin dimers to the microtubule end, where a stabilizing cap forms. Below the cap, tubulin dimers are in GDP-bound state, owing to GTPase activity of alpha-tubulin. In Enteroctopus dofleini (North Pacific giant octopus), this protein is Tubulin beta chain.